A 638-amino-acid chain; its full sequence is Chaperone protein DnaK (638 aa).

A Phosphothreonine; by autocatalysis modification is found at threonine 198. The interval 598–638 (YEASQKEAAEADAKADAAKDSDVVDADFEEIDEDDDKKKSA) is disordered. The span at 601 to 619 (SQKEAAEADAKADAAKDSD) shows a compositional bias: basic and acidic residues. The segment covering 620-632 (VVDADFEEIDEDD) has biased composition (acidic residues).

It belongs to the heat shock protein 70 family.

Acts as a chaperone. This Mesorhizobium japonicum (strain LMG 29417 / CECT 9101 / MAFF 303099) (Mesorhizobium loti (strain MAFF 303099)) protein is Chaperone protein DnaK.